Reading from the N-terminus, the 159-residue chain is Pathogenesis-related leaf protein 6 (159 aa).

The first 24 residues, Met-1–Ala-24, serve as a signal peptide directing secretion. Gln-25 carries the post-translational modification Pyrrolidone carboxylic acid. The 116-residue stretch at Leu-32–Tyr-147 folds into the SCP domain. 3 disulfides stabilise this stretch: Cys-68/Cys-136, Cys-109/Cys-115, and Cys-131/Cys-145.

Belongs to the CRISP family.

Functionally, probably involved in the defense reaction of plants against pathogens. Has antifungal activity. In Solanum lycopersicum (Tomato), this protein is Pathogenesis-related leaf protein 6 (PR1B1).